Reading from the N-terminus, the 201-residue chain is Proteasome subunit beta type-2 (201 aa).

An N-acetylmethionine modification is found at methionine 1.

The protein belongs to the peptidase T1B family. As to quaternary structure, the 26S proteasome consists of a 20S proteasome core and two 19S regulatory subunits. The 20S proteasome core is a barrel-shaped complex made of 28 subunits that are arranged in four stacked rings. The two outer rings are each formed by seven alpha subunits, and the two inner rings are formed by seven beta subunits. The proteolytic activity is exerted by three beta-subunits PSMB5, PSMB6 and PSMB7. As to expression, detected in liver (at protein level).

The protein resides in the cytoplasm. It is found in the nucleus. Its function is as follows. Non-catalytic component of the 20S core proteasome complex involved in the proteolytic degradation of most intracellular proteins. This complex plays numerous essential roles within the cell by associating with different regulatory particles. Associated with two 19S regulatory particles, forms the 26S proteasome and thus participates in the ATP-dependent degradation of ubiquitinated proteins. The 26S proteasome plays a key role in the maintenance of protein homeostasis by removing misfolded or damaged proteins that could impair cellular functions, and by removing proteins whose functions are no longer required. Associated with the PA200 or PA28, the 20S proteasome mediates ubiquitin-independent protein degradation. This type of proteolysis is required in several pathways including spermatogenesis (20S-PA200 complex) or generation of a subset of MHC class I-presented antigenic peptides (20S-PA28 complex). In Mus musculus (Mouse), this protein is Proteasome subunit beta type-2 (Psmb2).